Consider the following 284-residue polypeptide: 4-hydroxybenzoate octaprenyltransferase (284 aa).

7 consecutive transmembrane segments (helical) span residues V33–F53, I93–L113, H136–A156, G159–Y179, L209–Y229, Y235–L252, and A264–W284.

It belongs to the UbiA prenyltransferase family. Mg(2+) is required as a cofactor.

It is found in the cell inner membrane. It catalyses the reaction all-trans-octaprenyl diphosphate + 4-hydroxybenzoate = 4-hydroxy-3-(all-trans-octaprenyl)benzoate + diphosphate. The protein operates within cofactor biosynthesis; ubiquinone biosynthesis. In terms of biological role, catalyzes the prenylation of para-hydroxybenzoate (PHB) with an all-trans polyprenyl group. Mediates the second step in the final reaction sequence of ubiquinone-8 (UQ-8) biosynthesis, which is the condensation of the polyisoprenoid side chain with PHB, generating the first membrane-bound Q intermediate 3-octaprenyl-4-hydroxybenzoate. The chain is 4-hydroxybenzoate octaprenyltransferase from Vibrio parahaemolyticus serotype O3:K6 (strain RIMD 2210633).